The chain runs to 391 residues: Pepsin B (391 aa).

An N-terminal signal peptide occupies residues 1-16; that stretch reads MKCLILALICLQLSEG. A propeptide spans 17 to 60 (activation peptide); sequence LVVRQILHKGKSIRERMEENGVLEDFLRYNKKADPAAKFLFNKD. The region spanning 75 to 388 is the Peptidase A1 domain; it reads YFGEISIGTP…DMANNRVGFA (314 aa). Asp93 is a catalytic residue. 2 disulfides stabilise this stretch: Cys106–Cys111 and Cys270–Cys274. Asp279 is an active-site residue. The cysteines at positions 313 and 346 are disulfide-linked.

Belongs to the peptidase A1 family.

It localises to the secreted. The catalysed reaction is Degradation of gelatin, little activity on hemoglobin. Specificity on B chain of insulin more restricted than that of pepsin A. Does not cleave 1-Phe-|-Val-2, 4-Gln-|-His-5 or 23-Gly-|-Phe-24.. Hydrolyzes various peptides including beta-endorphin, insulin B chain, dynorphin A, and neurokinin A, with high specificity for the cleavage of the Phe-Xaa bonds. The polypeptide is Pepsin B (Monodelphis domestica (Gray short-tailed opossum)).